The following is a 65-amino-acid chain: Large ribosomal subunit protein bL35 (65 aa).

It belongs to the bacterial ribosomal protein bL35 family.

The chain is Large ribosomal subunit protein bL35 from Photorhabdus laumondii subsp. laumondii (strain DSM 15139 / CIP 105565 / TT01) (Photorhabdus luminescens subsp. laumondii).